Reading from the N-terminus, the 257-residue chain is Homeobox protein goosecoid (257 aa).

The segment at residues 160–219 is a DNA-binding region (homeobox); that stretch reads KRRHRTIFTDEQLEALENLFQETKYPDVGTREQLARKVHLREEKVEVWFKNRRAKWRRQK. The disordered stretch occupies residues 213-257; sequence AKWRRQKRSSSEESENAEKWNKTSSSKASPEKREEEGKSDLDSDS. Positions 241–257 are enriched in basic and acidic residues; the sequence is SPEKREEEGKSDLDSDS.

This sequence belongs to the paired homeobox family. Bicoid subfamily.

It is found in the nucleus. Its function is as follows. Regulates chordin (CHRD). May play a role in spatial programing within discrete embryonic fields or lineage compartments during organogenesis. In concert with NKX3-2, plays a role in defining the structural components of the middle ear; required for the development of the entire tympanic ring. Probably involved in the regulatory networks that define neural crest cell fate specification and determine mesoderm cell lineages in mammals. In Homo sapiens (Human), this protein is Homeobox protein goosecoid (GSC).